The primary structure comprises 61 residues: Large ribosomal subunit protein bL28A (61 aa).

The protein belongs to the bacterial ribosomal protein bL28 family.

The sequence is that of Large ribosomal subunit protein bL28A (rpmB1) from Streptomyces coelicolor (strain ATCC BAA-471 / A3(2) / M145).